A 264-amino-acid chain; its full sequence is tRNA pseudouridine synthase A (264 aa).

The active-site Nucleophile is D51. Y109 is a substrate binding site.

The protein belongs to the tRNA pseudouridine synthase TruA family. As to quaternary structure, homodimer.

It carries out the reaction uridine(38/39/40) in tRNA = pseudouridine(38/39/40) in tRNA. Functionally, formation of pseudouridine at positions 38, 39 and 40 in the anticodon stem and loop of transfer RNAs. The chain is tRNA pseudouridine synthase A from Staphylococcus aureus (strain MRSA252).